The primary structure comprises 595 residues: MAGSTAGYGQIIEYIQDKLYLASYDHTPDAKTPFPYPAEQPKSPSKRRAQASPSKKRSPVYFTVDDTLLYNSFHADFGPLHIGHLYRFAVHFHDLLAANNDRAIVFYSRTDARSRANAACLVACYMVLIQSWPPHLALAPIAQADPPYMPFRDAGYSQADFILNIQDVVYGVWKAKEQGVCGLRDFSLEEYEKFERVDMGDFNWISPHFLAFASPQHQPVAPIPRDSPEYAALPSTVSEVRSSRLPLPFKNVLEHFATRGVGLVVRLNSELYSPSYFTALGISHIDMIFEDGTCPPLPLVKKFIRMAHEMINVKHKAIAVHCKAGLGRTGCLIGAYLIYRYGFTANEVIAFMRFMRPGMVVGPQQHWLHLNQGSFREWWFEDCMKEKLAQMQPNPVTPGRSPAKHRAAAVTTPPQNGHSKRSALGEIDNNEATPIYDDNLPAPTPGQPRKSHRKDSRHHPYSRTASGSLVVDKDTRKTRRSTDSSESEEETQLRMLAKQRSSKSPAASPGQRSISYSATVTASYTLNDDIHEDRENWGGAAQPPKTPVTSKTSGAVSVSKVRSSSRRVTGESKGVRKPSGRIGSTGSPVRVKAQA.

Residues 32–57 (TPFPYPAEQPKSPSKRRAQASPSKKR) are disordered. A compositionally biased stretch (basic residues) spans 44–57 (PSKRRAQASPSKKR). One can recognise a Tyrosine-protein phosphatase domain in the interval 233–381 (LPSTVSEVRS…QGSFREWWFE (149 aa)). The active-site Phosphocysteine intermediate is the Cys-322. Positions 392-595 (QPNPVTPGRS…GSPVRVKAQA (204 aa)) are disordered. The segment covering 449–461 (RKSHRKDSRHHPY) has biased composition (basic residues). A compositionally biased stretch (basic and acidic residues) spans 471–483 (VDKDTRKTRRSTD). Over residues 502-526 (SKSPAASPGQRSISYSATVTASYTL) the composition is skewed to polar residues.

This sequence belongs to the protein-tyrosine phosphatase family. Non-receptor class CDC14 subfamily.

It is found in the nucleus. It localises to the cytoplasm. Its subcellular location is the cell septum. The enzyme catalyses O-phospho-L-tyrosyl-[protein] + H2O = L-tyrosyl-[protein] + phosphate. Functionally, protein phosphatase which antagonizes mitotic cyclin-dependent kinase nimX, the inactivation of which is essential for exit from mitosis. To access its substrates, is released from nucleolar sequestration during mitosis. Plays an essential in coordinating the nuclear division cycle with cytokinesis through the cytokinesis checkpoint. Involved in chromosome segregation, where it is required for meiosis I spindle dissambly as well as for establishing two consecutive chromosome segregation phases. Required for the transcription of the two major endoglucanase genes eglA and eglB and growth on synthetic cellulose as the sole carbon source. In Emericella nidulans (strain FGSC A4 / ATCC 38163 / CBS 112.46 / NRRL 194 / M139) (Aspergillus nidulans), this protein is Tyrosine-protein phosphatase cdcA (cdcA).